We begin with the raw amino-acid sequence, 322 residues long: Tlg2p-like protein a (322 aa).

Residues 1-301 (MATRNRTLLF…QRHGGMVKCA (301 aa)) lie on the Cytoplasmic side of the membrane. A coiled-coil region spans residues 116–146 (KEDQHNIESLTQEITFLLKKSEKQLQRLSAS). In terms of domain architecture, t-SNARE coiled-coil homology spans 226–288 (EEVSVEREKE…EDGLKQLQKA (63 aa)). A helical; Anchor for type IV membrane protein transmembrane segment spans residues 302–322 (SVLVILCFIMLLLLILKEIFL).

The protein belongs to the syntaxin family. In terms of assembly, interacts with VTI12 and SYP61 to form a t-SNARE complex and with VPS45. Interacts with TNO1. Binds to YKT61 and YKT62. Core constituent of the SNARE complex required for membrane fusion at the trans-Golgi network. In terms of tissue distribution, mostly expressed in flowers, to a lower extent in leaves and roots, and, at low levels, in stems.

It localises to the golgi apparatus. The protein resides in the trans-Golgi network membrane. Its function is as follows. Contributes to the regulation of secretory and vacuolar transport pathways in the post-Golgi network, and to the maintenance of the Golgi apparatus and trans-Golgi network (TGN) morphologies. Together with VTI12, required for membrane fusion. Vesicle trafficking protein that functions in the secretory pathway and mediates liposome fusion; the fusion of phospholipid vesicles containing SYP41 and VTI12 is triggered by YKT61 and YKT62. Required for extracellular resistance responses to a fungal pathogen. Also involved in the protection of chloroplasts from salicylic acid-dependent biotic stress. This Arabidopsis thaliana (Mouse-ear cress) protein is Tlg2p-like protein a.